We begin with the raw amino-acid sequence, 699 residues long: tRNA 5-methylaminomethyl-2-thiouridine biosynthesis bifunctional protein MnmC (699 aa).

Positions 1–260 (MTAKPQKSCQ…ERKLLRQQAD (260 aa)) are tRNA (mnm(5)s(2)U34)-methyltransferase. The FAD-dependent cmnm(5)s(2)U34 oxidoreductase stretch occupies residues 282-699 (VGGGLASANL…LRKLLKGKAL (418 aa)).

The protein in the N-terminal section; belongs to the methyltransferase superfamily. tRNA (mnm(5)s(2)U34)-methyltransferase family. In the C-terminal section; belongs to the DAO family. FAD is required as a cofactor.

Its subcellular location is the cytoplasm. It carries out the reaction 5-aminomethyl-2-thiouridine(34) in tRNA + S-adenosyl-L-methionine = 5-methylaminomethyl-2-thiouridine(34) in tRNA + S-adenosyl-L-homocysteine + H(+). Catalyzes the last two steps in the biosynthesis of 5-methylaminomethyl-2-thiouridine (mnm(5)s(2)U) at the wobble position (U34) in tRNA. Catalyzes the FAD-dependent demodification of cmnm(5)s(2)U34 to nm(5)s(2)U34, followed by the transfer of a methyl group from S-adenosyl-L-methionine to nm(5)s(2)U34, to form mnm(5)s(2)U34. The polypeptide is tRNA 5-methylaminomethyl-2-thiouridine biosynthesis bifunctional protein MnmC (Shewanella sp. (strain MR-4)).